The following is a 256-amino-acid chain: Pimeloyl-[acyl-carrier protein] methyl ester esterase (256 aa).

The 225-residue stretch at 16–240 (LVILHGWGVN…PKASHAPFLS (225 aa)) folds into the AB hydrolase-1 domain. Substrate-binding positions include tryptophan 22, 80–81 (SL), and 143–147 (FLAIQ). Serine 80 acts as the Nucleophile in catalysis. Active-site residues include aspartate 207 and histidine 235. Histidine 235 is a binding site for substrate.

It belongs to the AB hydrolase superfamily. Carboxylesterase BioH family. In terms of assembly, monomer.

It localises to the cytoplasm. It carries out the reaction 6-carboxyhexanoyl-[ACP] methyl ester + H2O = 6-carboxyhexanoyl-[ACP] + methanol + H(+). It participates in cofactor biosynthesis; biotin biosynthesis. The physiological role of BioH is to remove the methyl group introduced by BioC when the pimeloyl moiety is complete. It allows to synthesize pimeloyl-ACP via the fatty acid synthetic pathway through the hydrolysis of the ester bonds of pimeloyl-ACP esters. The chain is Pimeloyl-[acyl-carrier protein] methyl ester esterase from Shewanella woodyi (strain ATCC 51908 / MS32).